Consider the following 328-residue polypeptide: Glyoxylate reductase/hydroxypyruvate reductase (328 aa).

Ser-36 is subject to Phosphoserine. Substrate is bound at residue 83–84 (VG). NADP(+) contacts are provided by residues 162 to 164 (GRI), 185 to 188 (RQPR), Ser-217, and Ile-243. The substrate site is built by Arg-245 and Asp-269. Ser-272 is modified (phosphoserine). The active-site Proton donor is His-293. Residue 293-296 (HIGS) participates in substrate binding. Gly-295 is a binding site for NADP(+). Position 298 is a phosphothreonine (Thr-298).

This sequence belongs to the D-isomer specific 2-hydroxyacid dehydrogenase family. Homodimer. As to expression, ubiquitous. Most abundantly expressed in the liver.

It catalyses the reaction glycolate + NADP(+) = glyoxylate + NADPH + H(+). It carries out the reaction (R)-glycerate + NAD(+) = 3-hydroxypyruvate + NADH + H(+). The enzyme catalyses (R)-glycerate + NADP(+) = 3-hydroxypyruvate + NADPH + H(+). Its function is as follows. Enzyme with hydroxy-pyruvate reductase, glyoxylate reductase and D-glycerate dehydrogenase enzymatic activities. Reduces hydroxypyruvate to D-glycerate, glyoxylate to glycolate, oxidizes D-glycerate to hydroxypyruvate. The chain is Glyoxylate reductase/hydroxypyruvate reductase (GRHPR) from Homo sapiens (Human).